We begin with the raw amino-acid sequence, 1145 residues long: MQIKPIITYSGSCPLFRSLESQILNAIPLDTCEWRRTFQRPTKHVRLEAQAQQFNVAALEKYKQGDWSILEHPILHIFVTECNDVDTYKATIREAIDIWLKTLTSYGVSDWMILLVETLDMRKTKNFMPRTTVLDKIRLDFGTKNDDRCISVLNPAKFEQKSTESFRCLVQRIRFLMLTSYNRNIVKYEELIRSKREKRNIEGWDFRQYFFMQEDLALIFEKLELPTEALIQYDELDAMFSQFITHTGLNEKQQWLNHFRKPLDAFHGICLTRADKFEMRNKIRDEGVSLLEFRNYLFERQAYLLLTCNDIPEIAKRLLNFLFSTLREVELIKLECQEGALCCWEFVCALEVLQLCEQAMEPNELTCFQHCAPIWNLAKDKLYELGKLCGLLPGCTPTSEQLHIVVQLSSGIGDAPSEQHQFLQATPQLRDRSPNRKPKKSGAEQLKEALGSNQAFQKLYLELAELAISTYKHVTRLRSARLVGLDLGNFYCALNEPHKAVGFFTDLLRELKAENWHMLSSQTLLELANCYRKMGDSLAYTKTCSSISCCAELETLVRTFYFDEFLKSLKTLKTTLSAQPSIENANYCVLEDHFRILDIEVVNQKPIIQDDYILVQLKVESLYPRGVVAENVKLCYELEASSLELAMENVSLTASPSTVKAKDTSSRLKVSLQLVYKQDNRLHSAAVACDLPKSKQPVRRTSSTKRKLSPSVQADFTNFVQAENIALQPGVNLIEMKAKATRVGCWQFKQLCISMSSLEFLSEQLPFMPATFEISTKPASATLEFKTLIAGIVQPISLNVSGGSFIFPPDAKITLRCSKNLRIRQARNTDDEAAYNDDQSFESTLQVPLVQFKSFEERRIPLEVLTDMPGRKVSKHHEHHIALNCPWSRTELPIAVDFQPAMEATCRLHTCGTQKFLQVIMKGMEAHLLLQHAQVKCDVPGVQLLDLNPESQQPIEIYKSLTVTYLYEIQVEPLKTEHELPVVKVHFVIKYASLSQPDVWRTYGCAFDLVDYTTLFKLQAQLEPNELCRLRTVCNMNLKITKVHENPYTDLMYEVLNDQNLWAVCGRSAGVVSMKDVDSHSISLDVMPLSTGFLPMPSIRLSKYTAGGKSKTDGHSKVHPFPPGQVYNSTKSMQIHVIASVAGDQ.

It belongs to the TMEM1 family. Part of the multisubunit TRAPP (transport protein particle) complex. Interacts with Shal (via C-terminal dendritic targeting motif). Co-expressed with Shal in the nervous system.

Its subcellular location is the golgi apparatus. The protein resides in the cis-Golgi network. It localises to the cell projection. The protein localises to the dendrite. It is found in the perikaryon. May play a role in vesicular transport from endoplasmic reticulum to Golgi. Has a role in one of the several mechanisms underlying dendritic localization of Shal channels. The sequence is that of Trafficking protein particle complex subunit 10 (SIDL) from Drosophila melanogaster (Fruit fly).